A 290-amino-acid chain; its full sequence is Diaminopimelate epimerase (290 aa).

2 residues coordinate substrate: N11 and N78. Residue C87 is the Proton donor of the active site. Residues 88–89, N163, N199, and 217–218 contribute to the substrate site; these read GN and ER. C226 (proton acceptor) is an active-site residue. Substrate is bound at residue 227 to 228; it reads GT.

Belongs to the diaminopimelate epimerase family. In terms of assembly, homodimer.

Its subcellular location is the cytoplasm. It catalyses the reaction (2S,6S)-2,6-diaminopimelate = meso-2,6-diaminopimelate. The protein operates within amino-acid biosynthesis; L-lysine biosynthesis via DAP pathway; DL-2,6-diaminopimelate from LL-2,6-diaminopimelate: step 1/1. Functionally, catalyzes the stereoinversion of LL-2,6-diaminopimelate (L,L-DAP) to meso-diaminopimelate (meso-DAP), a precursor of L-lysine and an essential component of the bacterial peptidoglycan. The polypeptide is Diaminopimelate epimerase (Mycobacterium ulcerans (strain Agy99)).